We begin with the raw amino-acid sequence, 466 residues long: Ribulose bisphosphate carboxylase large chain (466 aa).

Lys-5 carries the N6,N6,N6-trimethyllysine modification. Residues Asn-114 and Thr-164 each coordinate substrate. Lys-166 serves as the catalytic Proton acceptor. Lys-168 lines the substrate pocket. Positions 192, 194, and 195 each coordinate Mg(2+). Lys-192 carries the N6-carboxylysine modification. The Proton acceptor role is filled by His-285. The substrate site is built by Arg-286, His-318, and Ser-370.

The protein belongs to the RuBisCO large chain family. Type I subfamily. Heterohexadecamer of 8 large chains and 8 small chains; disulfide-linked. The disulfide link is formed within the large subunit homodimers. Mg(2+) serves as cofactor. The disulfide bond which can form in the large chain dimeric partners within the hexadecamer appears to be associated with oxidative stress and protein turnover.

The protein resides in the plastid. Its subcellular location is the chloroplast. It catalyses the reaction 2 (2R)-3-phosphoglycerate + 2 H(+) = D-ribulose 1,5-bisphosphate + CO2 + H2O. It carries out the reaction D-ribulose 1,5-bisphosphate + O2 = 2-phosphoglycolate + (2R)-3-phosphoglycerate + 2 H(+). RuBisCO catalyzes two reactions: the carboxylation of D-ribulose 1,5-bisphosphate, the primary event in carbon dioxide fixation, as well as the oxidative fragmentation of the pentose substrate in the photorespiration process. Both reactions occur simultaneously and in competition at the same active site. The protein is Ribulose bisphosphate carboxylase large chain of Adenium obesum (Desert rose).